Consider the following 244-residue polypeptide: Small ribosomal subunit protein eS6 (244 aa).

Positions 185-244 (RLQRKRHMRAVKRRRYAKQREEEATYAKLLAKRKKEEREAHAKRRSSARESSLRESKSKA) are disordered. Residues 186–201 (LQRKRHMRAVKRRRYA) show a composition bias toward basic residues. Basic and acidic residues predominate over residues 231–244 (SARESSLRESKSKA).

The protein belongs to the eukaryotic ribosomal protein eS6 family. Post-translationally, ribosomal protein S6 is the major substrate of protein kinases in eukaryote ribosomes.

Component of the 40S small ribosomal subunit. Plays an important role in controlling cell growth and proliferation through the selective translation of particular classes of mRNA. This Branchiostoma floridae (Florida lancelet) protein is Small ribosomal subunit protein eS6 (RPS6).